The chain runs to 474 residues: Methylenetetrahydrofolate--tRNA-(uracil-5-)-methyltransferase TrmFO (474 aa).

Residue 15–20 (GAGLAG) coordinates FAD. The segment at 453–474 (PLLPTAPDTTGAAGEETTQAES) is disordered.

This sequence belongs to the MnmG family. TrmFO subfamily. The cofactor is FAD.

The protein localises to the cytoplasm. The catalysed reaction is uridine(54) in tRNA + (6R)-5,10-methylene-5,6,7,8-tetrahydrofolate + NADH + H(+) = 5-methyluridine(54) in tRNA + (6S)-5,6,7,8-tetrahydrofolate + NAD(+). The enzyme catalyses uridine(54) in tRNA + (6R)-5,10-methylene-5,6,7,8-tetrahydrofolate + NADPH + H(+) = 5-methyluridine(54) in tRNA + (6S)-5,6,7,8-tetrahydrofolate + NADP(+). Its function is as follows. Catalyzes the folate-dependent formation of 5-methyl-uridine at position 54 (M-5-U54) in all tRNAs. The chain is Methylenetetrahydrofolate--tRNA-(uracil-5-)-methyltransferase TrmFO from Nitratidesulfovibrio vulgaris (strain ATCC 29579 / DSM 644 / CCUG 34227 / NCIMB 8303 / VKM B-1760 / Hildenborough) (Desulfovibrio vulgaris).